The chain runs to 75 residues: Kappa-conotoxin RIIIK (75 aa).

The first 19 residues, 1–19 (MSKLGVLLTICLLLFPLTA), serve as a signal peptide directing secretion. Residues 20 to 50 (LPMDGDQPVDRLAERMQDNISSEQHTFFEKR) constitute a propeptide that is removed on maturation. 4-hydroxyproline occurs at positions 52, 63, 65, and 71. 3 disulfide bridges follow: Cys54–Cys67, Cys55–Cys72, and Cys62–Cys73. Thr74 carries the threonine amide modification.

The protein belongs to the conotoxin M superfamily. In terms of tissue distribution, expressed by the venom duct.

It is found in the secreted. Functionally, kappa-conotoxins inhibits voltage-gated potassium channels (Kv). This synthetic toxin reversibly inhibits the insect potassium channel Shaker K+, the teleost homolog TSha1 and the mammalian Kv1.2/KCNA2 channel. Interacts with the pore region of the insect channel, in a state-dependent manner. Causes seizure when intracerebrovascularly injected into mice. Is also toxic when intrathecally injected into mice, but shows no visible effects by intraperitoneal injection. Shows protective effects on cardiac tissue when administered after an ischemic event. This chain is Kappa-conotoxin RIIIK, found in Conus radiatus (Rayed cone).